The sequence spans 350 residues: Putative F-box protein At1g23770 (350 aa).

Over residues 1-15 (MDTGFADSNNDSSPG) the composition is skewed to polar residues. The interval 1 to 29 (MDTGFADSNNDSSPGEGSKRGNSGIEGPV) is disordered. One can recognise an F-box domain in the interval 206–252 (PPCLMLLPTELKLKILELLPGVSIGYMACVCTEMRYLASDNDLWEHK).

This is Putative F-box protein At1g23770 from Arabidopsis thaliana (Mouse-ear cress).